The sequence spans 268 residues: Ribosomal RNA small subunit methyltransferase A (268 aa).

S-adenosyl-L-methionine is bound by residues Asn23, Leu25, Gly50, Glu72, Asp94, and Asn116.

This sequence belongs to the class I-like SAM-binding methyltransferase superfamily. rRNA adenine N(6)-methyltransferase family. RsmA subfamily.

The protein resides in the cytoplasm. It carries out the reaction adenosine(1518)/adenosine(1519) in 16S rRNA + 4 S-adenosyl-L-methionine = N(6)-dimethyladenosine(1518)/N(6)-dimethyladenosine(1519) in 16S rRNA + 4 S-adenosyl-L-homocysteine + 4 H(+). Functionally, specifically dimethylates two adjacent adenosines (A1518 and A1519) in the loop of a conserved hairpin near the 3'-end of 16S rRNA in the 30S particle. May play a critical role in biogenesis of 30S subunits. The sequence is that of Ribosomal RNA small subunit methyltransferase A from Mycoplasmoides gallisepticum (strain R(low / passage 15 / clone 2)) (Mycoplasma gallisepticum).